We begin with the raw amino-acid sequence, 636 residues long: MNLSDITHPNQLHGLSNRQLEDIARQIREKHLQTIAASGGHLGPGLGVVELTIALYQTLDLDRDKVIWDVGHQAYPHKMLTGRYHRFHTLRQKDGIAGYLKRCESNFDHFGAGHASTSISAGLGMALARDAKGEDYKVVSIIGDGALTGGMALEAINHAGHLPHTNLMVVLNDNEMSISPNVGAISRYLNKVRLSDPVQFLSDNLEEQFKHLPFFGESLTPEMERVKEGMKRLAMPKVGAVIEELGFKYFGPIDGHNLEELISTFKQAHKAGGPVFVHVATVKGKGYELAEKDQVGYHAQSPFNLATGKAIPSNKPKPPSYSKVFAHTLTTLAQNDPKIIGITAAMATGTGLDKLHAKLPKQYIDVGIAEQHAVTLSAGLACEGMRPVVAIYSTFLQRAYDQVLHDVCIQNLPVFFCLDRAGIVGADGPTHQGLYDIAYLRCIPNLTIMAPKDEAELQRMVVTGINHTDGPIAMRYPRGSGVGVPLMEEGWEPVSIGKGEILRNGDDVLLVGYGTMVHQSLQVAEILKEHGIEATVVNARFVKPLDTELIVPLAQRIGKVVTLEEGCLMGGFGSAVAEALLDHDVVVPIKRFGVPDKLVDHAKPDESKADLGLTSPQIAEEIRQLFFNTPQPSAVS.

Thiamine diphosphate contacts are provided by residues histidine 72 and 113 to 115 (GHA). Aspartate 144 is a Mg(2+) binding site. Thiamine diphosphate is bound by residues 145–146 (GA), asparagine 174, tyrosine 287, and glutamate 370. Asparagine 174 contributes to the Mg(2+) binding site.

It belongs to the transketolase family. DXPS subfamily. As to quaternary structure, homodimer. It depends on Mg(2+) as a cofactor. The cofactor is thiamine diphosphate.

The catalysed reaction is D-glyceraldehyde 3-phosphate + pyruvate + H(+) = 1-deoxy-D-xylulose 5-phosphate + CO2. Its pathway is metabolic intermediate biosynthesis; 1-deoxy-D-xylulose 5-phosphate biosynthesis; 1-deoxy-D-xylulose 5-phosphate from D-glyceraldehyde 3-phosphate and pyruvate: step 1/1. Its function is as follows. Catalyzes the acyloin condensation reaction between C atoms 2 and 3 of pyruvate and glyceraldehyde 3-phosphate to yield 1-deoxy-D-xylulose-5-phosphate (DXP). This is 1-deoxy-D-xylulose-5-phosphate synthase from Crocosphaera subtropica (strain ATCC 51142 / BH68) (Cyanothece sp. (strain ATCC 51142)).